A 458-amino-acid polypeptide reads, in one-letter code: tRNA(Ile)-lysidine synthase (458 aa).

36–41 (SGGADS) provides a ligand contact to ATP.

This sequence belongs to the tRNA(Ile)-lysidine synthase family.

It is found in the cytoplasm. The enzyme catalyses cytidine(34) in tRNA(Ile2) + L-lysine + ATP = lysidine(34) in tRNA(Ile2) + AMP + diphosphate + H(+). Its function is as follows. Ligates lysine onto the cytidine present at position 34 of the AUA codon-specific tRNA(Ile) that contains the anticodon CAU, in an ATP-dependent manner. Cytidine is converted to lysidine, thus changing the amino acid specificity of the tRNA from methionine to isoleucine. In Protochlamydia amoebophila (strain UWE25), this protein is tRNA(Ile)-lysidine synthase.